Reading from the N-terminus, the 245-residue chain is tRNA (guanine-N(7)-)-methyltransferase (245 aa).

Positions 75, 100, 127, and 149 each coordinate S-adenosyl-L-methionine. The active site involves Asp149. Substrate contacts are provided by residues Lys153, Asp185, and 222-225 (TKFE).

The protein belongs to the class I-like SAM-binding methyltransferase superfamily. TrmB family.

The enzyme catalyses guanosine(46) in tRNA + S-adenosyl-L-methionine = N(7)-methylguanosine(46) in tRNA + S-adenosyl-L-homocysteine. It functions in the pathway tRNA modification; N(7)-methylguanine-tRNA biosynthesis. Its function is as follows. Catalyzes the formation of N(7)-methylguanine at position 46 (m7G46) in tRNA. In Acinetobacter baylyi (strain ATCC 33305 / BD413 / ADP1), this protein is tRNA (guanine-N(7)-)-methyltransferase.